The following is a 225-amino-acid chain: Large ribosomal subunit protein bL25 (225 aa).

Residues 188–225 (EEIEEAEAEAQATDADTATDDSEQTSEEQAEENKEDKE) form a disordered region. The span at 204-217 (TATDDSEQTSEEQA) shows a compositional bias: acidic residues.

The protein belongs to the bacterial ribosomal protein bL25 family. CTC subfamily. In terms of assembly, part of the 50S ribosomal subunit; part of the 5S rRNA/L5/L18/L25 subcomplex. Contacts the 5S rRNA. Binds to the 5S rRNA independently of L5 and L18.

Functionally, this is one of the proteins that binds to the 5S RNA in the ribosome where it forms part of the central protuberance. In Exiguobacterium sibiricum (strain DSM 17290 / CCUG 55495 / CIP 109462 / JCM 13490 / 255-15), this protein is Large ribosomal subunit protein bL25.